We begin with the raw amino-acid sequence, 342 residues long: Phosphoribosylformylglycinamidine cyclo-ligase (342 aa).

This sequence belongs to the AIR synthase family.

The protein resides in the cytoplasm. The enzyme catalyses 2-formamido-N(1)-(5-O-phospho-beta-D-ribosyl)acetamidine + ATP = 5-amino-1-(5-phospho-beta-D-ribosyl)imidazole + ADP + phosphate + H(+). Its pathway is purine metabolism; IMP biosynthesis via de novo pathway; 5-amino-1-(5-phospho-D-ribosyl)imidazole from N(2)-formyl-N(1)-(5-phospho-D-ribosyl)glycinamide: step 2/2. The chain is Phosphoribosylformylglycinamidine cyclo-ligase from Staphylococcus aureus (strain Mu3 / ATCC 700698).